The following is a 219-amino-acid chain: Large ribosomal subunit protein uL4c (219 aa).

Residues 53–81 (REHTASTKTKSQVRGGGKKPWKQKGTGRA) are disordered. Residues 68 to 79 (GGKKPWKQKGTG) are compositionally biased toward basic residues.

Belongs to the universal ribosomal protein uL4 family. Part of the 50S ribosomal subunit.

It localises to the plastid. The protein localises to the chloroplast. In terms of biological role, probably binds the 23S rRNA. This chain is Large ribosomal subunit protein uL4c (rpl4), found in Cyanidium caldarium (Red alga).